The chain runs to 616 residues: Chaperone protein HscA (616 aa).

Belongs to the heat shock protein 70 family.

Chaperone involved in the maturation of iron-sulfur cluster-containing proteins. Has a low intrinsic ATPase activity which is markedly stimulated by HscB. Involved in the maturation of IscU. The chain is Chaperone protein HscA from Yersinia enterocolitica serotype O:8 / biotype 1B (strain NCTC 13174 / 8081).